Here is a 300-residue protein sequence, read N- to C-terminus: Iron-dependent extradiol dioxygenase (300 aa).

VOC domains lie at 5–120 (SLAY…AFHG) and 142–270 (GLGH…FGCE). Residue His145 participates in Fe cation binding. His200, His215, Asp250, and Tyr256 together coordinate substrate. Residue His215 coordinates Fe cation. Residue Glu266 coordinates Fe cation.

The protein belongs to the extradiol ring-cleavage dioxygenase family. As to quaternary structure, homodimer. It depends on Fe(2+) as a cofactor.

It carries out the reaction 3,4-dihydroxy-9,10-secoandrosta-1,3,5(10)-triene-9,17-dione + O2 = (1E,2Z)-3-hydroxy-5,9,17-trioxo-4,5:9,10-disecoandrosta-1(10),2-dien-4-oate + H(+). It functions in the pathway steroid metabolism; cholesterol metabolism. Catalyzes the meta-cleavage of 3,4-dihydroxy-9,10-seconandrost-1,3,5(10)-triene-9,17-dione (3,4-DHSA) to produce 4,5-9,10-diseco-3-hydroxy-5,9,17-trioxoandrosta-1(10),2-diene-4-oic acid (4,9-DSHA). Also involved in biphenyl and polychlorinated biphenyls (PCBs) degradation. The polypeptide is Iron-dependent extradiol dioxygenase (hsaC) (Rhodococcus jostii (strain RHA1)).